A 107-amino-acid polypeptide reads, in one-letter code: Histone H4 (107 aa).

Over residues 1–16 (MPGRGKGGKGGKGYGK) the composition is skewed to gly residues. The interval 1-23 (MPGRGKGGKGGKGYGKVGAKRHA) is disordered. Residues 17–21 (VGAKR) mediate DNA binding.

Belongs to the histone H4 family. As to quaternary structure, the nucleosome is a histone octamer containing two molecules each of H2A, H2B, H3 and H4 assembled in one H3-H4 heterotetramer and two H2A-H2B heterodimers. The octamer wraps approximately 147 bp of DNA.

It localises to the nucleus. Its subcellular location is the chromosome. Functionally, core component of nucleosome. Nucleosomes wrap and compact DNA into chromatin, limiting DNA accessibility to the cellular machineries which require DNA as a template. Histones thereby play a central role in transcription regulation, DNA repair, DNA replication and chromosomal stability. DNA accessibility is regulated via a complex set of post-translational modifications of histones, also called histone code, and nucleosome remodeling. The sequence is that of Histone H4 from Euplotes crassus.